We begin with the raw amino-acid sequence, 318 residues long: Lysophospholipase D GDPD3 (318 aa).

Residues 1–2 lie on the Cytoplasmic side of the membrane; the sequence is MS. A helical membrane pass occupies residues 3 to 23; it reads LLLYYALPALGSYAMLSIFFL. Topologically, residues 24–198 are extracellular; it reads RRPHLLHTPR…KAANPEMPLS (175 aa). Residues 39–308 form the GP-PDE domain; sequence IRLGAHRGGS…DYPTALRHYL (270 aa). The a divalent metal cation site is built by Glu-71, Asp-73, and His-86. Residues 199–221 traverse the membrane as a helical segment; the sequence is FTISRGFWVLLSYYLGLLPFIPI. The Cytoplasmic segment spans residues 222-318; the sequence is PEKFFFCFLP…DNHGPAARTS (97 aa).

Belongs to the glycerophosphoryl diester phosphodiesterase family. As to expression, widely expressed, with high level in kidney and ovary.

It localises to the membrane. Its subcellular location is the cytoplasm. It is found in the perinuclear region. The protein localises to the endoplasmic reticulum. The enzyme catalyses 1-hexadecanoyl-sn-glycero-3-phosphocholine + H2O = 1-hexadecanoyl-sn-glycero-3-phosphate + choline + H(+). The catalysed reaction is 1-hexadecanoyl-sn-glycero-3-phosphocholine + H2O = sn-glycerol 3-phosphocholine + hexadecanoate + H(+). It carries out the reaction 1-O-(1Z-octadecenyl)-sn-glycero-3-phospho-N-hexadecanoyl-ethanolamine + H2O = 1-O-(1Z-octadecenyl)-sn-glycero-3-phosphate + N-hexadecanoylethanolamine + H(+). It catalyses the reaction N-(5Z,8Z,11Z,14Z-eicosatetraenoyl)-1-(9Z-octadecenoyl)-sn-glycero-3-phosphoethanolamine + H2O = N-(5Z,8Z,11Z,14Z-eicosatetraenoyl)-ethanolamine + 1-(9Z-octadecenoyl)-sn-glycero-3-phosphate + H(+). The enzyme catalyses N,1-di-(9Z-octadecenoyl)-sn-glycero-3-phosphoethanolamine + H2O = N-(9Z-octadecenoyl) ethanolamine + 1-(9Z-octadecenoyl)-sn-glycero-3-phosphate + H(+). The catalysed reaction is N-hexadecanoyl-1-(9Z-octadecenoyl)-sn-glycero-3-phosphoethanolamine + H2O = N-hexadecanoylethanolamine + 1-(9Z-octadecenoyl)-sn-glycero-3-phosphate + H(+). It carries out the reaction 1-O-hexadecyl-sn-glycero-3-phosphocholine + H2O = 1-O-hexadecyl-sn-glycero-3-phosphate + choline + H(+). Its activity is regulated as follows. Lysophospholipase D activity is stimulated by calcium. Loss of lysophospholipase D activity in presence of EDTA. Its function is as follows. Hydrolyzes lysoglycerophospholipids to produce lysophosphatidic acid (LPA) and the corresponding amines. Shows a preference for 1-O-alkyl-sn-glycero-3-phosphocholine (lyso-PAF), lysophosphatidylcholine (lyso-PC) and N-acylethanolamine lysophospholipids. Does not display glycerophosphodiester phosphodiesterase activity, since it cannot hydrolyze either glycerophosphoinositol or glycerophosphocholine. The chain is Lysophospholipase D GDPD3 from Homo sapiens (Human).